The primary structure comprises 86 residues: Putative regulatory protein Desal_2819 (86 aa).

This sequence belongs to the RemA family.

This chain is Putative regulatory protein Desal_2819, found in Maridesulfovibrio salexigens (strain ATCC 14822 / DSM 2638 / NCIMB 8403 / VKM B-1763) (Desulfovibrio salexigens).